Consider the following 340-residue polypeptide: Heat-inducible transcription repressor HrcA (340 aa).

Belongs to the HrcA family.

In terms of biological role, negative regulator of class I heat shock genes (grpE-dnaK-dnaJ and groELS operons). Prevents heat-shock induction of these operons. This is Heat-inducible transcription repressor HrcA from Burkholderia thailandensis (strain ATCC 700388 / DSM 13276 / CCUG 48851 / CIP 106301 / E264).